Consider the following 381-residue polypeptide: Chaperone protein DnaJ (381 aa).

Residues 5 to 70 (DFYEVLGVSR…QKKAAYDQYG (66 aa)) enclose the J domain. The CR-type zinc-finger motif lies at 136 to 214 (GVSKEIEVPT…CHGQGRKQKT (79 aa)). Positions 149, 152, 166, 169, 188, 191, 202, and 205 each coordinate Zn(2+). 4 CXXCXGXG motif repeats span residues 149–156 (CDICDGSG), 166–173 (CGTCHGHG), 188–195 (CPTCNGKG), and 202–209 (CNSCHGQG).

This sequence belongs to the DnaJ family. In terms of assembly, homodimer. Zn(2+) serves as cofactor.

The protein resides in the cytoplasm. Functionally, participates actively in the response to hyperosmotic and heat shock by preventing the aggregation of stress-denatured proteins and by disaggregating proteins, also in an autonomous, DnaK-independent fashion. Unfolded proteins bind initially to DnaJ; upon interaction with the DnaJ-bound protein, DnaK hydrolyzes its bound ATP, resulting in the formation of a stable complex. GrpE releases ADP from DnaK; ATP binding to DnaK triggers the release of the substrate protein, thus completing the reaction cycle. Several rounds of ATP-dependent interactions between DnaJ, DnaK and GrpE are required for fully efficient folding. Also involved, together with DnaK and GrpE, in the DNA replication of plasmids through activation of initiation proteins. This Vibrio atlanticus (strain LGP32) (Vibrio splendidus (strain Mel32)) protein is Chaperone protein DnaJ.